Reading from the N-terminus, the 389-residue chain is Na(+)/H(+) antiporter NhaA 1 (389 aa).

11 helical membrane-spanning segments follow: residues 12–32 (VLNE…ALLV), 62–82 (FLLW…GLEL), 97–117 (IVLP…LFAL), 128–148 (GWAI…MMCG), 157–177 (IFLL…IAIF), 184–204 (IVAF…NILG), 220–240 (ISVL…AFFI), 260–280 (FWLA…VNLS), 282–302 (IDIG…LFVG), 331–351 (LYGV…IDGL), and 365–385 (LAIL…LKFF).

Belongs to the NhaA Na(+)/H(+) (TC 2.A.33) antiporter family.

The protein localises to the cell inner membrane. The catalysed reaction is Na(+)(in) + 2 H(+)(out) = Na(+)(out) + 2 H(+)(in). Its function is as follows. Na(+)/H(+) antiporter that extrudes sodium in exchange for external protons. This is Na(+)/H(+) antiporter NhaA 1 from Campylobacter jejuni subsp. jejuni serotype O:6 (strain 81116 / NCTC 11828).